Consider the following 365-residue polypeptide: Ribosomal RNA large subunit methyltransferase M (365 aa).

S-adenosyl-L-methionine is bound by residues Ser-187, 220-223 (CPGG), Asp-239, Asp-259, and Asp-276. The Proton acceptor role is filled by Lys-305.

Belongs to the class I-like SAM-binding methyltransferase superfamily. RNA methyltransferase RlmE family. RlmM subfamily. Monomer.

The protein resides in the cytoplasm. The enzyme catalyses cytidine(2498) in 23S rRNA + S-adenosyl-L-methionine = 2'-O-methylcytidine(2498) in 23S rRNA + S-adenosyl-L-homocysteine + H(+). In terms of biological role, catalyzes the 2'-O-methylation at nucleotide C2498 in 23S rRNA. This is Ribosomal RNA large subunit methyltransferase M from Psychromonas ingrahamii (strain DSM 17664 / CCUG 51855 / 37).